The chain runs to 485 residues: Probable protein phosphatase 2C 3 (485 aa).

The segment covering 1–11 (MSSPSPSSEAA) has biased composition (low complexity). Disordered stretches follow at residues 1–29 (MSSP…AAGG) and 43–72 (ARAE…AEGG). A compositionally biased stretch (basic residues) spans 13–23 (AHHHHHQRRQH). In terms of domain architecture, PPM-type phosphatase spans 107–353 (SSSSSSSLAS…DDTTCIVVDM (247 aa)). Mn(2+)-binding residues include Asp129, Gly130, Asp305, and Asp344.

This sequence belongs to the PP2C family. Mg(2+) serves as cofactor. It depends on Mn(2+) as a cofactor.

The enzyme catalyses O-phospho-L-seryl-[protein] + H2O = L-seryl-[protein] + phosphate. It catalyses the reaction O-phospho-L-threonyl-[protein] + H2O = L-threonyl-[protein] + phosphate. The polypeptide is Probable protein phosphatase 2C 3 (Oryza sativa subsp. japonica (Rice)).